A 247-amino-acid polypeptide reads, in one-letter code: 3-deoxy-manno-octulosonate cytidylyltransferase (247 aa).

This sequence belongs to the KdsB family.

The protein resides in the cytoplasm. The catalysed reaction is 3-deoxy-alpha-D-manno-oct-2-ulosonate + CTP = CMP-3-deoxy-beta-D-manno-octulosonate + diphosphate. Its pathway is nucleotide-sugar biosynthesis; CMP-3-deoxy-D-manno-octulosonate biosynthesis; CMP-3-deoxy-D-manno-octulosonate from 3-deoxy-D-manno-octulosonate and CTP: step 1/1. It participates in bacterial outer membrane biogenesis; lipopolysaccharide biosynthesis. Activates KDO (a required 8-carbon sugar) for incorporation into bacterial lipopolysaccharide in Gram-negative bacteria. This is 3-deoxy-manno-octulosonate cytidylyltransferase from Methylorubrum extorquens (strain CM4 / NCIMB 13688) (Methylobacterium extorquens).